Reading from the N-terminus, the 186-residue chain is Protein YABBY 2 (186 aa).

Residues 17–44 form a C4-type zinc finger; sequence CNFCNTIFAVSVPSNSMLNIVTVRCGHC.

It belongs to the YABBY family. As to expression, expressed in leaf blades, leaf sheaths and flowers.

Its subcellular location is the nucleus. In Oryza sativa subsp. japonica (Rice), this protein is Protein YABBY 2 (YAB2).